The primary structure comprises 513 residues: ATP synthase subunit alpha (513 aa).

169–176 (GDRQTGKT) is a binding site for ATP.

Belongs to the ATPase alpha/beta chains family. As to quaternary structure, F-type ATPases have 2 components, CF(1) - the catalytic core - and CF(0) - the membrane proton channel. CF(1) has five subunits: alpha(3), beta(3), gamma(1), delta(1), epsilon(1). CF(0) has three main subunits: a(1), b(2) and c(9-12). The alpha and beta chains form an alternating ring which encloses part of the gamma chain. CF(1) is attached to CF(0) by a central stalk formed by the gamma and epsilon chains, while a peripheral stalk is formed by the delta and b chains.

The protein localises to the cell inner membrane. The catalysed reaction is ATP + H2O + 4 H(+)(in) = ADP + phosphate + 5 H(+)(out). Produces ATP from ADP in the presence of a proton gradient across the membrane. The alpha chain is a regulatory subunit. The polypeptide is ATP synthase subunit alpha (Salmonella arizonae (strain ATCC BAA-731 / CDC346-86 / RSK2980)).